A 284-amino-acid chain; its full sequence is UPF0761 membrane protein IL2447 (284 aa).

A run of 6 helical transmembrane segments spans residues 41–61 (MLSL…FPMF), 98–118 (MTAI…SAID), 137–157 (FAVY…GLAA), 178–198 (FVLW…MYQL), 214–234 (VIAA…ITFF), and 247–267 (IPIL…GAVL).

This sequence belongs to the UPF0761 family.

It is found in the cell inner membrane. This chain is UPF0761 membrane protein IL2447, found in Idiomarina loihiensis (strain ATCC BAA-735 / DSM 15497 / L2-TR).